An 829-amino-acid polypeptide reads, in one-letter code: DNA topoisomerase 1 (829 aa).

Residues 1 to 248 (MSEDHVQNDS…AKGNEEGVKK (248 aa)) are disordered. The segment covering 22–36 (HKHKKDKEHRHKEHK) has biased composition (basic residues). 3 stretches are compositionally biased toward basic and acidic residues: residues 37 to 58 (KDKD…SEKK), 68 to 159 (KHRE…EKMK), and 193 to 220 (KENK…DDKK). Interaction with DNA regions lie at residues 481-482 (KY), 544-549 (RAGNEK), and 641-643 (TAK). The region spanning 488 to 821 (SSRIKGEKDW…SIWQTTTSNF (334 aa)) is the Topo IB-type catalytic domain. The active-site O-(3'-phospho-DNA)-tyrosine intermediate is the Tyr-779.

The protein belongs to the type IB topoisomerase family. In terms of assembly, monomer.

It localises to the nucleus. The catalysed reaction is ATP-independent breakage of single-stranded DNA, followed by passage and rejoining.. Functionally, releases the supercoiling and torsional tension of DNA introduced during the DNA replication and transcription by transiently cleaving and rejoining one strand of the DNA duplex. Introduces a single-strand break via transesterification at a target site in duplex DNA. The scissile phosphodiester is attacked by the catalytic tyrosine of the enzyme, resulting in the formation of a DNA-(3'-phosphotyrosyl)-enzyme intermediate and the expulsion of a 5'-OH DNA strand. TThe free DNA strand then rotates around the intact phosphodiester bond on the opposing strand, thus removing DNA supercoils. Finally, in the religation step, the DNA 5'-OH attacks the covalent intermediate to expel the active-site tyrosine and restore the DNA phosphodiester backbone. May play a role in the circadian transcription of the core circadian clock component BMAL1. The polypeptide is DNA topoisomerase 1 (top1) (Xenopus laevis (African clawed frog)).